The sequence spans 562 residues: Phosphoenolpyruvate carboxykinase (ATP) (562 aa).

265–272 (GLSGTGKT) serves as a coordination point for ATP.

This sequence belongs to the phosphoenolpyruvate carboxykinase (ATP) family.

It catalyses the reaction oxaloacetate + ATP = phosphoenolpyruvate + ADP + CO2. It participates in carbohydrate biosynthesis; gluconeogenesis. The polypeptide is Phosphoenolpyruvate carboxykinase (ATP) (pckA) (Dictyostelium discoideum (Social amoeba)).